A 295-amino-acid polypeptide reads, in one-letter code: UDP-N-acetylenolpyruvoylglucosamine reductase (295 aa).

An FAD-binding PCMH-type domain is found at 26-189; sequence VGGRADILFK…VEAEFKGVNS (164 aa). The active site involves Arg169. Residue Cys218 is the Proton donor of the active site. Glu288 is a catalytic residue.

It belongs to the MurB family. FAD is required as a cofactor.

The protein resides in the cytoplasm. The catalysed reaction is UDP-N-acetyl-alpha-D-muramate + NADP(+) = UDP-N-acetyl-3-O-(1-carboxyvinyl)-alpha-D-glucosamine + NADPH + H(+). Its pathway is cell wall biogenesis; peptidoglycan biosynthesis. In terms of biological role, cell wall formation. This Wolbachia sp. subsp. Drosophila simulans (strain wRi) protein is UDP-N-acetylenolpyruvoylglucosamine reductase.